Reading from the N-terminus, the 626-residue chain is (R)-linalool synthase 2, chloroplastic (626 aa).

A chloroplast-targeting transit peptide spans 1-21 (MAFVSIAPLASRCCVHKSFVS). Residues aspartate 377, aspartate 381, and glutamate 529 each coordinate Mg(2+). A DDXXD motif motif is present at residues 377–381 (DDIYD).

This sequence belongs to the terpene synthase family. Tpsd subfamily. The cofactor is Mg(2+). Mn(2+) is required as a cofactor.

It is found in the plastid. The protein resides in the chloroplast. The catalysed reaction is (2E)-geranyl diphosphate + H2O = (R)-linalool + diphosphate. It functions in the pathway terpene metabolism; oleoresin biosynthesis. Functionally, terpene synthase (mono-TPS) involved in the biosynthesis of monoterpene natural products included in conifer oleoresin secretions and volatile emissions; these compounds contribute to biotic and abiotic stress defense against herbivores and pathogens. Catalyzes the conversion of (2E)-geranyl diphosphate (GPP) to (R)-linalool. The sequence is that of (R)-linalool synthase 2, chloroplastic from Picea sitchensis (Sitka spruce).